A 473-amino-acid chain; its full sequence is UDP-N-acetylmuramoylalanine--D-glutamate ligase (473 aa).

120-126 contributes to the ATP binding site; sequence GSNGKTT.

The protein belongs to the MurCDEF family.

It localises to the cytoplasm. It catalyses the reaction UDP-N-acetyl-alpha-D-muramoyl-L-alanine + D-glutamate + ATP = UDP-N-acetyl-alpha-D-muramoyl-L-alanyl-D-glutamate + ADP + phosphate + H(+). Its pathway is cell wall biogenesis; peptidoglycan biosynthesis. Its function is as follows. Cell wall formation. Catalyzes the addition of glutamate to the nucleotide precursor UDP-N-acetylmuramoyl-L-alanine (UMA). This is UDP-N-acetylmuramoylalanine--D-glutamate ligase from Nitrosospira multiformis (strain ATCC 25196 / NCIMB 11849 / C 71).